The chain runs to 602 residues: Elongation factor 4 (602 aa).

The region spanning 8–189 (KNIRNFSIIA…KIITTIPAPS (182 aa)) is the tr-type G domain. GTP-binding positions include 20 to 25 (DHGKST) and 136 to 139 (NKID).

The protein belongs to the TRAFAC class translation factor GTPase superfamily. Classic translation factor GTPase family. LepA subfamily.

The protein resides in the cell inner membrane. It catalyses the reaction GTP + H2O = GDP + phosphate + H(+). In terms of biological role, required for accurate and efficient protein synthesis under certain stress conditions. May act as a fidelity factor of the translation reaction, by catalyzing a one-codon backward translocation of tRNAs on improperly translocated ribosomes. Back-translocation proceeds from a post-translocation (POST) complex to a pre-translocation (PRE) complex, thus giving elongation factor G a second chance to translocate the tRNAs correctly. Binds to ribosomes in a GTP-dependent manner. The chain is Elongation factor 4 from Helicobacter pylori (strain HPAG1).